The primary structure comprises 451 residues: Trigger factor (451 aa).

Residues 165–250 enclose the PPIase FKBP-type domain; sequence DDKLTIDFEG…LHQIQAREVL (86 aa).

Belongs to the FKBP-type PPIase family. Tig subfamily.

It is found in the cytoplasm. It catalyses the reaction [protein]-peptidylproline (omega=180) = [protein]-peptidylproline (omega=0). In terms of biological role, involved in protein export. Acts as a chaperone by maintaining the newly synthesized protein in an open conformation. Functions as a peptidyl-prolyl cis-trans isomerase. This is Trigger factor from Helicobacter acinonychis (strain Sheeba).